A 496-amino-acid polypeptide reads, in one-letter code: Glycogen synthase (496 aa).

Residue K24 participates in ADP-alpha-D-glucose binding.

The protein belongs to the glycosyltransferase 1 family. Bacterial/plant glycogen synthase subfamily.

It carries out the reaction [(1-&gt;4)-alpha-D-glucosyl](n) + ADP-alpha-D-glucose = [(1-&gt;4)-alpha-D-glucosyl](n+1) + ADP + H(+). The protein operates within glycan biosynthesis; glycogen biosynthesis. In terms of biological role, synthesizes alpha-1,4-glucan chains using ADP-glucose. The protein is Glycogen synthase of Nitrosospira multiformis (strain ATCC 25196 / NCIMB 11849 / C 71).